A 1030-amino-acid chain; its full sequence is Calcium-transporting ATPase 4, plasma membrane-type (1030 aa).

At 1–157 (MSNLLRDFEV…NRYTEKPARS (157 aa)) the chain is on the cytoplasmic side. Residues 19–30 (ARQRWRSSVSIV) form an interaction with calmodulin region. Ser-28 carries the post-translational modification Phosphoserine. Residues 158–178 (FLMFVWEALHDITLIILMVCA) traverse the membrane as a helical segment. Topologically, residues 179-196 (VVSIGVGVATEGFPRGMY) are lumenal. The chain crosses the membrane as a helical span at residues 197-217 (DGTGILLSILLVVMVTAISDY). The Cytoplasmic segment spans residues 218 to 345 (KQSLQFRDLD…EDETPLQVKL (128 aa)). The chain crosses the membrane as a helical span at residues 346-365 (NGVATIIGKIGLSFAVLTFV). At 366 to 395 (VLCIRFVLDKATSGSFTNWSSEDALTLLDY) the chain is on the lumenal side. The chain crosses the membrane as a helical span at residues 396-413 (FAISVTIIVVAVPEGLPL). The Cytoplasmic segment spans residues 414 to 804 (AVTLSLAFAM…RWGRAVYINI (391 aa)). Catalysis depends on Asp-451, which acts as the 4-aspartylphosphate intermediate. Asp-749 and Asp-753 together coordinate Mg(2+). A helical transmembrane segment spans residues 805–823 (QKFVQFQLTVNVVALIINF). Over 824 to 834 (VSACITGSAPL) the chain is Lumenal. The helical transmembrane segment at 835-855 (TAVQLLWVNMIMDTLGALALA) threads the bilayer. Residues 856-875 (TEPPNEGLMKRAPIARTASF) are Cytoplasmic-facing. The chain crosses the membrane as a helical span at residues 876 to 898 (ITKTMWRNIAGQSVYQLIVLGIL). Residues 899 to 910 (NFAGKSLLKLDG) are Lumenal-facing. The chain crosses the membrane as a helical span at residues 911–932 (PDSTAVLNTVIFNSFVFCQVFN). Residues 933-950 (EINSREIEKINVFKGMFN) lie on the Cytoplasmic side of the membrane. The chain crosses the membrane as a helical span at residues 951 to 972 (SWVFTWVMTVTVVFQVIIVEFL). Residues 973–982 (GAFASTVPLS) lie on the Lumenal side of the membrane. A helical membrane pass occupies residues 983–1004 (WQHWLLSILIGSLNMIVAVILK). Residues 1005-1030 (CVPVESRHHHDGYDLLPSGPSSSNSA) are Cytoplasmic-facing.

Belongs to the cation transport ATPase (P-type) (TC 3.A.3) family. Type IIB subfamily.

It localises to the vacuole membrane. The catalysed reaction is Ca(2+)(in) + ATP + H2O = Ca(2+)(out) + ADP + phosphate + H(+). Its activity is regulated as follows. Activated by calmodulin. In terms of biological role, this magnesium-dependent enzyme catalyzes the hydrolysis of ATP coupled with the translocation of calcium from the cytosol into small vacuoles. This chain is Calcium-transporting ATPase 4, plasma membrane-type (ACA4), found in Arabidopsis thaliana (Mouse-ear cress).